Consider the following 264-residue polypeptide: Splicing factor U2af 38 kDa subunit (264 aa).

Residues 12 to 40 form a C3H1-type 1 zinc finger; it reads EKDKVNCSFYFKIGACRHGDRCSRIHNKP. At serine 19 the chain carries Phosphoserine. The region spanning 44–149 is the RRM domain; sequence QTVLLQNLYV…RPVYSELSPV (106 aa). The segment at 151 to 178 adopts a C3H1-type 2 zinc-finger fold; that stretch reads DFREACCRQYEMGECTRSGFCNFMHLKP. Positions 190-219 are enriched in basic residues; the sequence is RRRRARSRSRSPGRRRGSRSRSRSPGRRGG. The tract at residues 190-264 is disordered; sequence RRRRARSRSR…GGGGGGGGRY (75 aa). The span at 233 to 251 shows a compositional bias: basic and acidic residues; that stretch reads NERDNMRGNDRGNDRDRRK. Gly residues predominate over residues 253 to 264; sequence GGGGGGGGGGRY.

This sequence belongs to the splicing factor SR family. In terms of assembly, associates with a 65 kDa protein.

It localises to the nucleus. Its function is as follows. Necessary for the splicing of pre-mRNA. Binds to the polypyrimidine tract of introns early during spliceosome assembly. The polypeptide is Splicing factor U2af 38 kDa subunit (U2af38) (Drosophila melanogaster (Fruit fly)).